Consider the following 176-residue polypeptide: ATP-dependent protease subunit HslV (176 aa).

Thr2 is a catalytic residue. Na(+)-binding residues include Gly158, Cys161, and Thr164.

Belongs to the peptidase T1B family. HslV subfamily. In terms of assembly, a double ring-shaped homohexamer of HslV is capped on each side by a ring-shaped HslU homohexamer. The assembly of the HslU/HslV complex is dependent on binding of ATP.

Its subcellular location is the cytoplasm. It carries out the reaction ATP-dependent cleavage of peptide bonds with broad specificity.. Its activity is regulated as follows. Allosterically activated by HslU binding. In terms of biological role, protease subunit of a proteasome-like degradation complex believed to be a general protein degrading machinery. This Pasteurella multocida (strain Pm70) protein is ATP-dependent protease subunit HslV.